A 672-amino-acid chain; its full sequence is tRNA 5-methylaminomethyl-2-thiouridine biosynthesis bifunctional protein MnmC (672 aa).

The segment at Met-1–Glu-243 is tRNA (mnm(5)s(2)U34)-methyltransferase. The tract at residues Ile-269–Leu-672 is FAD-dependent cmnm(5)s(2)U34 oxidoreductase.

This sequence in the N-terminal section; belongs to the methyltransferase superfamily. tRNA (mnm(5)s(2)U34)-methyltransferase family. The protein in the C-terminal section; belongs to the DAO family. FAD is required as a cofactor.

The protein resides in the cytoplasm. It catalyses the reaction 5-aminomethyl-2-thiouridine(34) in tRNA + S-adenosyl-L-methionine = 5-methylaminomethyl-2-thiouridine(34) in tRNA + S-adenosyl-L-homocysteine + H(+). Functionally, catalyzes the last two steps in the biosynthesis of 5-methylaminomethyl-2-thiouridine (mnm(5)s(2)U) at the wobble position (U34) in tRNA. Catalyzes the FAD-dependent demodification of cmnm(5)s(2)U34 to nm(5)s(2)U34, followed by the transfer of a methyl group from S-adenosyl-L-methionine to nm(5)s(2)U34, to form mnm(5)s(2)U34. This Vibrio vulnificus (strain YJ016) protein is tRNA 5-methylaminomethyl-2-thiouridine biosynthesis bifunctional protein MnmC.